Consider the following 416-residue polypeptide: Solute carrier family 35 member D3 (416 aa).

A run of 10 helical transmembrane segments spans residues 9–29 (VLGISVAIAHGVFSGSLNILL), 38–58 (FSFLTLVQCLTSSTAALSLEL), 64–84 (LIAVPPFGLSLARSFAGVAVL), 103–123 (MYVVFKRCLPLVTMLIGVLVL), 131–151 (GVLAAVLITTCGAALAGAGDL), 155–175 (PIGYVTGVLAVLVHAAYLVLI), 187–207 (LTAQYVIAVSATPLLVICSFA), 224–244 (AMVCIFVACILIGCAMNFTTL), 257–277 (FVGVVKSIATITVGMVAFSDV), and 280–300 (TSLFIAGVVVNTLGSIIYCVA). Residues 334 to 384 (MEELPGEGGNGRSEGGEAAGGPAQESRQEVRGSPRGVPLVAGSSEEGSRRS) are disordered. A compositionally biased stretch (gly residues) spans 339 to 352 (GEGGNGRSEGGEAA).

The protein belongs to the TPT transporter family. SLC35D subfamily. As to quaternary structure, could interact with ATG14, BECN1 and PIK3C3 that form the PI3KC3-C1/AIC/autophagy initiation complex; enhancing the formation of the AIC and promoting autophagy.

It is found in the cytoplasmic vesicle. It localises to the secretory vesicle. The protein localises to the synaptic vesicle membrane. Its subcellular location is the early endosome membrane. The protein resides in the endoplasmic reticulum membrane. The catalysed reaction is UDP-alpha-D-glucose(in) = UDP-alpha-D-glucose(out). With respect to regulation, inhibited by proton uncouplers that directly abolish the proton electrochemical gradient. In terms of biological role, probable UDP-glucose transmembrane transporter involved in UDP-glucose transport from the cytosol to the lumen of synaptic vesicles. It is involved in platelet dense granules maturation. Its function is as follows. Alternatively, could function as a molecular adapter enhancing the formation of the PI3KC3-C1/AIC/autophagy initiation complex to promote autophagy in dopaminergic neurons. Could also regulate the plasma membrane localization of the D(1A) dopamine receptor/DRD1 and dopamine signaling. This Homo sapiens (Human) protein is Solute carrier family 35 member D3.